The following is a 261-amino-acid chain: Ribonuclease PH (261 aa).

Phosphate-binding positions include Arg-87 and 125–127 (GTR).

The protein belongs to the RNase PH family. In terms of assembly, homohexameric ring arranged as a trimer of dimers.

The enzyme catalyses tRNA(n+1) + phosphate = tRNA(n) + a ribonucleoside 5'-diphosphate. Functionally, phosphorolytic 3'-5' exoribonuclease that plays an important role in tRNA 3'-end maturation. Removes nucleotide residues following the 3'-CCA terminus of tRNAs; can also add nucleotides to the ends of RNA molecules by using nucleoside diphosphates as substrates, but this may not be physiologically important. Probably plays a role in initiation of 16S rRNA degradation (leading to ribosome degradation) during starvation. This Desulforudis audaxviator (strain MP104C) protein is Ribonuclease PH.